The chain runs to 462 residues: Phospho-2-dehydro-3-deoxyheptonate aldolase AroG (462 aa).

Cysteine 87 is a Mn(2+) binding site. Residues arginine 126, 283–284, lysine 306, and arginine 337 contribute to the phosphoenolpyruvate site; that span reads ER. The Mn(2+) site is built by histidine 369, glutamate 411, and aspartate 441.

As to quaternary structure, homodimer. Interacts with Rv0948c. Mn(2+) serves as cofactor. Requires Co(2+) as cofactor. The cofactor is Cd(2+).

The catalysed reaction is D-erythrose 4-phosphate + phosphoenolpyruvate + H2O = 7-phospho-2-dehydro-3-deoxy-D-arabino-heptonate + phosphate. The protein operates within metabolic intermediate biosynthesis; chorismate biosynthesis; chorismate from D-erythrose 4-phosphate and phosphoenolpyruvate: step 1/7. Feedback inhibited by tryptophan, tyrosine, phenylalanine and chorismate. Functionally, catalyzes an aldol-like condensation reaction between phosphoenolpyruvate (PEP) and D-erythrose 4-phosphate (E4P) to generate 3-deoxy-D-arabino-heptulosonate 7-phosphate (DAH7P) and inorganic phosphate. The protein is Phospho-2-dehydro-3-deoxyheptonate aldolase AroG (aroG) of Mycobacterium tuberculosis (strain ATCC 25618 / H37Rv).